Reading from the N-terminus, the 301-residue chain is UDP-N-acetylenolpyruvoylglucosamine reductase 1 (301 aa).

The FAD-binding PCMH-type domain occupies 29–196; that stretch reads KIGGPADILI…LEAVFQLQAG (168 aa). The active site involves arginine 174. Serine 225 acts as the Proton donor in catalysis. The active site involves glutamate 295.

Belongs to the MurB family. The cofactor is FAD.

The protein localises to the cytoplasm. The catalysed reaction is UDP-N-acetyl-alpha-D-muramate + NADP(+) = UDP-N-acetyl-3-O-(1-carboxyvinyl)-alpha-D-glucosamine + NADPH + H(+). Its pathway is cell wall biogenesis; peptidoglycan biosynthesis. Functionally, cell wall formation. The polypeptide is UDP-N-acetylenolpyruvoylglucosamine reductase 1 (murB1) (Bacillus cereus (strain ATCC 14579 / DSM 31 / CCUG 7414 / JCM 2152 / NBRC 15305 / NCIMB 9373 / NCTC 2599 / NRRL B-3711)).